Consider the following 557-residue polypeptide: DNA ligase (557 aa).

Position 251 (E251) interacts with ATP. Residue K253 is the N6-AMP-lysine intermediate of the active site. ATP is bound by residues R258, R273, E303, F342, R418, and K424.

Belongs to the ATP-dependent DNA ligase family. It depends on Mg(2+) as a cofactor.

It carries out the reaction ATP + (deoxyribonucleotide)n-3'-hydroxyl + 5'-phospho-(deoxyribonucleotide)m = (deoxyribonucleotide)n+m + AMP + diphosphate.. DNA ligase that seals nicks in double-stranded DNA during DNA replication, DNA recombination and DNA repair. This is DNA ligase from Methanosphaera stadtmanae (strain ATCC 43021 / DSM 3091 / JCM 11832 / MCB-3).